The primary structure comprises 283 residues: 2-dehydro-3-deoxyphosphooctonate aldolase (283 aa).

It belongs to the KdsA family.

Its subcellular location is the cytoplasm. It catalyses the reaction D-arabinose 5-phosphate + phosphoenolpyruvate + H2O = 3-deoxy-alpha-D-manno-2-octulosonate-8-phosphate + phosphate. It participates in carbohydrate biosynthesis; 3-deoxy-D-manno-octulosonate biosynthesis; 3-deoxy-D-manno-octulosonate from D-ribulose 5-phosphate: step 2/3. It functions in the pathway bacterial outer membrane biogenesis; lipopolysaccharide biosynthesis. This Shewanella frigidimarina (strain NCIMB 400) protein is 2-dehydro-3-deoxyphosphooctonate aldolase.